The chain runs to 313 residues: Foldase protein PrsA (313 aa).

An N-terminal signal peptide occupies residues 1 to 20 (MKKKLLAGAITLLSVATLAA). Cys-21 carries the N-palmitoyl cysteine lipid modification. Cys-21 is lipidated: S-diacylglycerol cysteine. One can recognise a PpiC domain in the interval 143–241 (TPDVTAQIIR…SQYYIVKLTK (99 aa)).

The protein belongs to the PrsA family.

It is found in the cell membrane. The catalysed reaction is [protein]-peptidylproline (omega=180) = [protein]-peptidylproline (omega=0). Its function is as follows. Plays a major role in protein secretion by helping the post-translocational extracellular folding of several secreted proteins. The protein is Foldase protein PrsA of Streptococcus pneumoniae (strain P1031).